A 325-amino-acid chain; its full sequence is Centromere protein O (325 aa).

The interval 1–35 is disordered; sequence MEEERNSDEKENALCGRSLTAASRDGGGRMPAAPL. Residues 55–112 adopt a coiled-coil conformation; the sequence is LEMLEAQAHELGLKQEEKEQQEKKLDRLKARVQELRARRDELRAKVELQEKRLLDKEG.

This sequence belongs to the CENP-O/MCM21 family. In terms of assembly, component of the CENPA-HI complex, at least composed of CENPH, CENPI, CENPK, CENPL, CENPM, CENPO and CENPP. Component of a discrete complex composed of at least CENPO, CENPP, CENPQ, CENPR and CENPU.

The protein resides in the nucleus. It is found in the chromosome. It localises to the centromere. In terms of biological role, component of the CENPA-HI complex, a centromeric complex involved in assembly of kinetochore proteins, mitotic progression and chromosome segregation. Involved in kinetochore assembly and required for recovery from spindle damage. This is Centromere protein O (CENPO) from Gallus gallus (Chicken).